The following is a 727-amino-acid chain: Endothelin-converting enzyme homolog (727 aa).

At 1 to 44 (MSFNFSRYSGAYTTTFSFLLLALLIVSAVLLSRPYAPALLHAEE) the chain is on the cytoplasmic side. Residues 45–65 (AYCVSMSCVTAAASVLSLMDA) traverse the membrane as a helical; Signal-anchor for type II membrane protein segment. The Peptidase M13 domain occupies 46-727 (YCVSMSCVTA…MNPVHKCEVW (682 aa)). Intrachain disulfides connect Cys-47-Cys-52, Cys-70-Cys-712, Cys-78-Cys-672, Cys-134-Cys-392, and Cys-601-Cys-724. Over 66–727 (TADPCSDFYQ…MNPVHKCEVW (662 aa)) the chain is Extracellular. Residues Asn-138, Asn-160, Asn-164, Asn-169, Asn-222, Asn-309, Asn-337, Asn-340, and Asn-511 are each glycosylated (N-linked (GlcNAc...) asparagine). His-564 contributes to the Zn(2+) binding site. The active site involves Glu-565. His-568 lines the Zn(2+) pocket. Asn-589 and Asn-608 each carry an N-linked (GlcNAc...) asparagine glycan. Residue Glu-624 coordinates Zn(2+). Asp-628 acts as the Proton donor in catalysis. A glycan (N-linked (GlcNAc...) asparagine) is linked at Asn-656.

The protein belongs to the peptidase M13 family. Zn(2+) is required as a cofactor. In terms of tissue distribution, highly expressed in brain and midgut, and to a lesser extent in fat body, ovaries, testes and haemocytes.

The protein resides in the cell membrane. In Locusta migratoria (Migratory locust), this protein is Endothelin-converting enzyme homolog.